The sequence spans 150 residues: Macrodomain Ter protein (150 aa).

This sequence belongs to the MatP family. In terms of assembly, homodimer.

Its subcellular location is the cytoplasm. Required for spatial organization of the terminus region of the chromosome (Ter macrodomain) during the cell cycle. Prevents early segregation of duplicated Ter macrodomains during cell division. Binds specifically to matS, which is a 13 bp signature motif repeated within the Ter macrodomain. In Klebsiella pneumoniae (strain 342), this protein is Macrodomain Ter protein.